A 154-amino-acid chain; its full sequence is Endoribonuclease YbeY (154 aa).

Residues His-114, His-118, and His-124 each contribute to the Zn(2+) site.

The protein belongs to the endoribonuclease YbeY family. The cofactor is Zn(2+).

The protein localises to the cytoplasm. Functionally, single strand-specific metallo-endoribonuclease involved in late-stage 70S ribosome quality control and in maturation of the 3' terminus of the 16S rRNA. This is Endoribonuclease YbeY from Histophilus somni (strain 2336) (Haemophilus somnus).